A 188-amino-acid polypeptide reads, in one-letter code: Holliday junction branch migration complex subunit RuvA (188 aa).

The interval 1 to 64 (MIAGISGRVL…QDGITLYGFS (64 aa)) is domain I. A domain II region spans residues 65 to 143 (NEMKKELFLS…SAGIKDMRIY (79 aa)). Residue tyrosine 143 is a region of interest, flexible linker. The domain III stretch occupies residues 143 to 186 (YHESLEALVSLGYPEKQAREAVKQVYREGMKTSELIKEALKFLS).

The protein belongs to the RuvA family. In terms of assembly, homotetramer. Forms an RuvA(8)-RuvB(12)-Holliday junction (HJ) complex. HJ DNA is sandwiched between 2 RuvA tetramers; dsDNA enters through RuvA and exits via RuvB. An RuvB hexamer assembles on each DNA strand where it exits the tetramer. Each RuvB hexamer is contacted by two RuvA subunits (via domain III) on 2 adjacent RuvB subunits; this complex drives branch migration. In the full resolvosome a probable DNA-RuvA(4)-RuvB(12)-RuvC(2) complex forms which resolves the HJ.

The protein localises to the cytoplasm. The RuvA-RuvB-RuvC complex processes Holliday junction (HJ) DNA during genetic recombination and DNA repair, while the RuvA-RuvB complex plays an important role in the rescue of blocked DNA replication forks via replication fork reversal (RFR). RuvA specifically binds to HJ cruciform DNA, conferring on it an open structure. The RuvB hexamer acts as an ATP-dependent pump, pulling dsDNA into and through the RuvAB complex. HJ branch migration allows RuvC to scan DNA until it finds its consensus sequence, where it cleaves and resolves the cruciform DNA. Promotes Holliday junction (HJ) branch migration in conjunction with RuvB. The chain is Holliday junction branch migration complex subunit RuvA from Thermotoga maritima (strain ATCC 43589 / DSM 3109 / JCM 10099 / NBRC 100826 / MSB8).